The following is a 111-amino-acid chain: Large ribosomal subunit protein uL22 (111 aa).

Belongs to the universal ribosomal protein uL22 family. Part of the 50S ribosomal subunit.

In terms of biological role, this protein binds specifically to 23S rRNA; its binding is stimulated by other ribosomal proteins, e.g. L4, L17, and L20. It is important during the early stages of 50S assembly. It makes multiple contacts with different domains of the 23S rRNA in the assembled 50S subunit and ribosome. Functionally, the globular domain of the protein is located near the polypeptide exit tunnel on the outside of the subunit, while an extended beta-hairpin is found that lines the wall of the exit tunnel in the center of the 70S ribosome. The polypeptide is Large ribosomal subunit protein uL22 (Geotalea daltonii (strain DSM 22248 / JCM 15807 / FRC-32) (Geobacter daltonii)).